The primary structure comprises 262 residues: Ribose-5-phosphate isomerase A (262 aa).

Residues 33–36 (TGST), 89–92 (DGTD), and 102–105 (KGGG) contribute to the substrate site. Catalysis depends on Glu111, which acts as the Proton acceptor. Position 129 (Lys129) interacts with substrate.

It belongs to the ribose 5-phosphate isomerase family. In terms of assembly, homodimer.

It catalyses the reaction aldehydo-D-ribose 5-phosphate = D-ribulose 5-phosphate. It participates in carbohydrate degradation; pentose phosphate pathway; D-ribose 5-phosphate from D-ribulose 5-phosphate (non-oxidative stage): step 1/1. Functionally, catalyzes the reversible conversion of ribose-5-phosphate to ribulose 5-phosphate. This Jannaschia sp. (strain CCS1) protein is Ribose-5-phosphate isomerase A.